The sequence spans 368 residues: Phosphoserine aminotransferase (368 aa).

Arg44 is a binding site for L-glutamate. Pyridoxal 5'-phosphate contacts are provided by residues Ala78 to Thr79, Trp104, Thr157, Asp179, and Gln202. At Lys203 the chain carries N6-(pyridoxal phosphate)lysine. Asn244–Thr245 is a binding site for pyridoxal 5'-phosphate.

It belongs to the class-V pyridoxal-phosphate-dependent aminotransferase family. SerC subfamily. As to quaternary structure, homodimer. The cofactor is pyridoxal 5'-phosphate.

The protein localises to the cytoplasm. It carries out the reaction O-phospho-L-serine + 2-oxoglutarate = 3-phosphooxypyruvate + L-glutamate. It catalyses the reaction 4-(phosphooxy)-L-threonine + 2-oxoglutarate = (R)-3-hydroxy-2-oxo-4-phosphooxybutanoate + L-glutamate. It participates in amino-acid biosynthesis; L-serine biosynthesis; L-serine from 3-phospho-D-glycerate: step 2/3. Its pathway is cofactor biosynthesis; pyridoxine 5'-phosphate biosynthesis; pyridoxine 5'-phosphate from D-erythrose 4-phosphate: step 3/5. Functionally, catalyzes the reversible conversion of 3-phosphohydroxypyruvate to phosphoserine and of 3-hydroxy-2-oxo-4-phosphonooxybutanoate to phosphohydroxythreonine. This Neisseria meningitidis serogroup B (strain ATCC BAA-335 / MC58) protein is Phosphoserine aminotransferase.